Consider the following 267-residue polypeptide: Regulatory protein RecX (267 aa).

It belongs to the RecX family.

The protein resides in the cytoplasm. Functionally, modulates RecA activity. This chain is Regulatory protein RecX, found in Staphylococcus haemolyticus (strain JCSC1435).